The chain runs to 232 residues: Charged multivesicular body protein 4c (232 aa).

Disordered stretches follow at residues 1–23 (MSKLGKFFKGSRSSRARAAPSAQ) and 172–232 (EQEE…AWAT). Residues 1–153 (MSKLGKFFKG…EISEAFSQRV (153 aa)) are intramolecular interaction with C-terminus. Over residues 11–23 (SRSSRARAAPSAQ) the composition is skewed to low complexity. 2 coiled-coil regions span residues 21-50 (SAQEALARLREIEEMMAKKQEYLENRIQRE) and 125-182 (LNKI…KMTS). The tract at residues 154 to 232 (QFADGFDEDE…DFKQLAAWAT (79 aa)) is intramolecular interaction with N-terminus. Residue Ser210 is modified to Phosphoserine; by AURKB.

This sequence belongs to the SNF7 family. In terms of assembly, probable core component of the endosomal sorting required for transport complex III (ESCRT-III). ESCRT-III components are thought to multimerize to form a flat lattice on the perimeter membrane of the endosome. Several assembly forms of ESCRT-III may exist that interact and act sequentially. Self-associates. Interacts with CHMP2A. Interacts with CHMP4A. Interacts with CHMP4B. Interacts with CHMP6. Interacts with VPS4A. Interacts with PDCD6IP; the interaction is direct. Post-translationally, phosphorylated at Ser-210 by AURKB during cytokinesis: together with ZFYVE19/ANCHR, phosphorylated CHMP4C retains abscission-competent VPS4 (VPS4A and/or VPS4B) at the midbody ring until abscission checkpoint signaling is terminated at late cytokinesis.

The protein resides in the cytoplasm. Its subcellular location is the cytosol. The protein localises to the late endosome membrane. It localises to the midbody. It is found in the midbody ring. Probable core component of the endosomal sorting required for transport complex III (ESCRT-III) which is involved in multivesicular bodies (MVBs) formation and sorting of endosomal cargo proteins into MVBs. MVBs contain intraluminal vesicles (ILVs) that are generated by invagination and scission from the limiting membrane of the endosome and mostly are delivered to lysosomes enabling degradation of membrane proteins, such as stimulated growth factor receptors, lysosomal enzymes and lipids. The MVB pathway appears to require the sequential function of ESCRT-O, -I,-II and -III complexes. ESCRT-III proteins mostly dissociate from the invaginating membrane before the ILV is released. The ESCRT machinery also functions in topologically equivalent membrane fission events, such as the terminal stages of cytokinesis. Key component of the cytokinesis checkpoint, a process required to delay abscission to prevent both premature resolution of intercellular chromosome bridges and accumulation of DNA damage: upon phosphorylation by AURKB, together with ZFYVE19/ANCHR, retains abscission-competent VPS4 (VPS4A and/or VPS4B) at the midbody ring until abscission checkpoint signaling is terminated at late cytokinesis. Deactivation of AURKB results in dephosphorylation of CHMP4C followed by its dissociation from ANCHR and VPS4 and subsequent abscission. ESCRT-III proteins are believed to mediate the necessary vesicle extrusion and/or membrane fission activities, possibly in conjunction with the AAA ATPase VPS4. CHMP4A/B/C are required for the exosomal release of SDCBP, CD63 and syndecan. This Rattus norvegicus (Rat) protein is Charged multivesicular body protein 4c (Chmp4c).